The chain runs to 271 residues: Neurexophilin-1 (271 aa).

A signal peptide spans 1 to 21 (MQAACWYVLLLLQPTIYLVTC). The segment at 22 to 97 (ANLTNGGKSE…WDWLRNSTDL (76 aa)) is II. Residues Asn-23, Asn-68, Asn-93, Asn-146, Asn-156, and Asn-162 are each glycosylated (N-linked (GlcNAc...) asparagine). Positions 98-176 (QEPRPRAKRR…LVPPTKIVEF (79 aa)) are III. Positions 177–185 (DLAQQTVID) are IV (linker domain). Residues 186–271 (AKDSKSFNCR…HSDTPYFPSG (86 aa)) form a v (Cys-rich) region.

This sequence belongs to the neurexophilin family.

The protein resides in the secreted. May be signaling molecules that resemble neuropeptides and that act by binding to alpha-neurexins and possibly other receptors. The protein is Neurexophilin-1 (NXPH1) of Pongo abelii (Sumatran orangutan).